The chain runs to 1143 residues: DNA polymerase III subunit alpha (1143 aa).

It belongs to the DNA polymerase type-C family. DnaE subfamily. DNA polymerase III contains a core (composed of alpha, epsilon and theta chains) that associates with a tau subunit. This core dimerizes to form the PolIII' complex. PolIII' associates with the gamma complex (composed of gamma, delta, delta', psi and chi chains) and with the beta chain to form the complete DNA polymerase III complex.

It localises to the cytoplasm. The enzyme catalyses DNA(n) + a 2'-deoxyribonucleoside 5'-triphosphate = DNA(n+1) + diphosphate. Its function is as follows. DNA polymerase III is a complex, multichain enzyme responsible for most of the replicative synthesis in bacteria. This DNA polymerase also exhibits 3' to 5' exonuclease activity. The alpha chain is the DNA polymerase. The sequence is that of DNA polymerase III subunit alpha (dnaE1) from Caulobacter vibrioides (strain NA1000 / CB15N) (Caulobacter crescentus).